A 282-amino-acid chain; its full sequence is MNSFPIPVVLLGPGSQAEDETLDYIHMPQGMSVYTPPVLPEPEQIACLTQAQSVLRAILDALDRADPKQPNPRIELWALDEENRQLLKQVLGEGEVSARIEGEYQVYIQEAVFAGVWRVVSTCPDATTDYIEVGAAPEVLRGAARYGANQWSLDVGRVPDGVMNAPSILAEIDDQLLSWHPGKPVHVVNLTLLPMSPQDITFLDETLGAASVTILSRGYGNCRISSTAVPYCWRVVYFNSQDTTILNTVEITDLPEVACAAPEDLRDSHERLTEVLKWVGSI.

Belongs to the HupH/HyaF family.

The polypeptide is Hydrogenase expression/formation protein HoxQ (hoxQ) (Cupriavidus necator (strain ATCC 17699 / DSM 428 / KCTC 22496 / NCIMB 10442 / H16 / Stanier 337) (Ralstonia eutropha)).